The chain runs to 371 residues: UDP-N-acetylglucosamine--N-acetylmuramyl-(pentapeptide) pyrophosphoryl-undecaprenol N-acetylglucosamine transferase (371 aa).

Residues 15–17 (TGG), Asn126, Arg172, Ser199, Ile256, 275–280 (ALTVSE), and Gln301 each bind UDP-N-acetyl-alpha-D-glucosamine.

This sequence belongs to the glycosyltransferase 28 family. MurG subfamily.

Its subcellular location is the cell inner membrane. The catalysed reaction is di-trans,octa-cis-undecaprenyl diphospho-N-acetyl-alpha-D-muramoyl-L-alanyl-D-glutamyl-meso-2,6-diaminopimeloyl-D-alanyl-D-alanine + UDP-N-acetyl-alpha-D-glucosamine = di-trans,octa-cis-undecaprenyl diphospho-[N-acetyl-alpha-D-glucosaminyl-(1-&gt;4)]-N-acetyl-alpha-D-muramoyl-L-alanyl-D-glutamyl-meso-2,6-diaminopimeloyl-D-alanyl-D-alanine + UDP + H(+). It participates in cell wall biogenesis; peptidoglycan biosynthesis. Cell wall formation. Catalyzes the transfer of a GlcNAc subunit on undecaprenyl-pyrophosphoryl-MurNAc-pentapeptide (lipid intermediate I) to form undecaprenyl-pyrophosphoryl-MurNAc-(pentapeptide)GlcNAc (lipid intermediate II). The polypeptide is UDP-N-acetylglucosamine--N-acetylmuramyl-(pentapeptide) pyrophosphoryl-undecaprenol N-acetylglucosamine transferase (Francisella tularensis subsp. holarctica (strain FTNF002-00 / FTA)).